Consider the following 473-residue polypeptide: ATP-dependent 6-phosphofructokinase 1 (473 aa).

At serine 71 the chain carries Phosphoserine. Residues glycine 102, arginine 165–glycine 166, and glycine 190–serine 193 each bind ATP. A Mg(2+)-binding site is contributed by aspartate 191. Substrate is bound by residues threonine 219–aspartate 221, methionine 264–arginine 266, glutamate 320, and tyrosine 376–arginine 379. Aspartate 221 functions as the Proton acceptor in the catalytic mechanism.

Belongs to the phosphofructokinase type A (PFKA) family. PPi-dependent PFK group II subfamily. Atypical ATP-dependent clade 'X' sub-subfamily. Homotetramer. It depends on Mg(2+) as a cofactor. Expressed in roots, leaves, stems and flowers.

The protein localises to the cytoplasm. It carries out the reaction beta-D-fructose 6-phosphate + ATP = beta-D-fructose 1,6-bisphosphate + ADP + H(+). Its pathway is carbohydrate degradation; glycolysis; D-glyceraldehyde 3-phosphate and glycerone phosphate from D-glucose: step 3/4. Allosterically activated by AMP. Its function is as follows. Catalyzes the phosphorylation of D-fructose 6-phosphate to fructose 1,6-bisphosphate by ATP, the first committing step of glycolysis. The polypeptide is ATP-dependent 6-phosphofructokinase 1 (Arabidopsis thaliana (Mouse-ear cress)).